The primary structure comprises 223 residues: Movement and silencing protein TGBp1 (223 aa).

One can recognise a (+)RNA virus helicase ATP-binding domain in the interval 1–136 (METVLSLLNE…QILRDLGYNI (136 aa)). Residues 137 to 223 (ASSKEDIVEK…HRSKLVLVSN (87 aa)) form the (+)RNA virus helicase C-terminal domain.

Belongs to the Tymovirales TGBp1 protein family. As to quaternary structure, homodimer and homooligomer. Interacts with capsid protein. Interacts with host AGO1; this interaction targets the host protein for degradation, thereby suppressing the antiviral RNA silencing.

The protein localises to the host cytoplasm. Its function is as follows. Transports viral genome to neighboring plant cells directly through plasmosdesmata, without any budding. The movement protein allows efficient cell to cell propagation, by bypassing the host cell wall barrier. Increases plasmodesma size exclusion limit. Acts as a suppressor of RNA-mediated gene silencing, also known as post-transcriptional gene silencing (PTGS), a mechanism of plant viral defense that limits the accumulation of viral RNAs. The polypeptide is Movement and silencing protein TGBp1 (Crataegus (hawthorn)).